The sequence spans 263 residues: 3'-5' ssDNA/RNA exonuclease TatD (263 aa).

Positions 92, 128, and 153 each coordinate a divalent metal cation.

It belongs to the metallo-dependent hydrolases superfamily. TatD-type hydrolase family. TatD subfamily. As to quaternary structure, monomer. It depends on Mg(2+) as a cofactor.

The protein localises to the cytoplasm. In terms of biological role, 3'-5' exonuclease that prefers single-stranded DNA and RNA. May play a role in the H(2)O(2)-induced DNA damage repair. The sequence is that of 3'-5' ssDNA/RNA exonuclease TatD from Rahnella sp. (strain Y9602).